A 531-amino-acid polypeptide reads, in one-letter code: SWI/SNF-related matrix-associated actin-dependent regulator of chromatin subfamily D member 2 (531 aa).

Residues arginine 81 and arginine 104 each carry the asymmetric dimethylarginine modification. Serine 203 is modified (phosphoserine). The tract at residues 205–227 (SKAEGDTAGTTGTPGGTPAGDKV) is disordered. A Phosphothreonine modification is found at threonine 217. Lysine 226 is covalently cross-linked (Glycyl lysine isopeptide (Lys-Gly) (interchain with G-Cter in SUMO2)). Residues 306–383 (HQPPQYKLDP…PMKLAGLLQH (78 aa)) enclose the SWIB/MDM2 domain.

Belongs to the SMARCD family. As to quaternary structure, component of the multiprotein chromatin-remodeling complexes SWI/SNF: SWI/SNF-A (BAF), SWI/SNF-B (PBAF) and related complexes. The canonical complex contains a catalytic subunit (either SMARCA4/BRG1/BAF190A or SMARCA2/BRM/BAF190B), and at least SMARCE1, ACTL6A/BAF53, SMARCC1/BAF155, SMARCC2/BAF170, and SMARCB1/SNF5/BAF47. Other subunits specific to each of the complexes may also be present permitting several possible combinations developmentally and tissue specific. Component of the BAF complex, which includes at least actin (ACTB), ARID1A/BAF250A, ARID1B/BAF250B, SMARCA2/BRM, SMARCA4/BRG1, ACTL6A/BAF53, ACTL6B/BAF53B, SMARCE1/BAF57, SMARCC1/BAF155, SMARCC2/BAF170, SMARCB1/SNF5/INI1, and one or more SMARCD1/BAF60A, SMARCD2/BAF60B, or SMARCD3/BAF60C. In muscle cells, the BAF complex also contains DPF3. Component of the SWI/SNF-B (PBAF) chromatin remodeling complex, at least composed of SMARCA4/BRG1, SMARCB1/BAF47/SNF5, ACTL6A/BAF53A or ACTL6B/BAF53B, SMARCE1/BAF57, SMARCD1/BAF60A, SMARCD2/BAF60B, perhaps SMARCD3/BAF60C, SMARCC1/BAF155, SMARCC2/BAF170, PBRM1/BAF180, ARID2/BAF200 and actin (ACTB). Interacts with UNKL. Interacts with CEBPE. Post-translationally, ubiquitinated through a signaling process involving RAC1 and the RING finger protein UNKL.

The protein localises to the nucleus. Involved in transcriptional activation and repression of select genes by chromatin remodeling (alteration of DNA-nucleosome topology). Component of SWI/SNF chromatin remodeling complexes that carry out key enzymatic activities, changing chromatin structure by altering DNA-histone contacts within a nucleosome in an ATP-dependent manner. Critical regulator of myeloid differentiation, controlling granulocytopoiesis and the expression of genes involved in neutrophil granule formation. In Bos taurus (Bovine), this protein is SWI/SNF-related matrix-associated actin-dependent regulator of chromatin subfamily D member 2 (SMARCD2).